The primary structure comprises 134 residues: Perlwapin (134 aa).

3 WAP domains span residues 2–45 (GPNL…CVPK), 46–89 (PKPG…YRPE), and 90–132 (KPGS…EKPC). Disulfide bonds link Cys-8–Cys-34, Cys-17–Cys-38, Cys-21–Cys-33, Cys-27–Cys-42, Cys-51–Cys-77, Cys-59–Cys-82, Cys-64–Cys-76, Cys-70–Cys-85, Cys-94–Cys-121, Cys-104–Cys-124, Cys-108–Cys-120, and Cys-114–Cys-128.

Nacreous layer of shell.

In terms of biological role, inhibits growth of calcium carbonate crystals. May inhibit growth of certain crystallographic planes in the mineral phase of nacre in the shell. The chain is Perlwapin from Haliotis laevigata (Smooth Australian abalone).